The following is a 202-amino-acid chain: Heat shock 22 kDa protein, mitochondrial (202 aa).

The N-terminal 31 residues, 1–31, are a transit peptide targeting the mitochondrion; it reads MASSLALKRFLSSGLLSSSFLRPVASSASRS. Residues 94 to 202 enclose the sHSP domain; that stretch reads VLSAASRRGW…RNNVINVKVD (109 aa).

It belongs to the small heat shock protein (HSP20) family.

The protein localises to the mitochondrion. The polypeptide is Heat shock 22 kDa protein, mitochondrial (HSP22) (Pisum sativum (Garden pea)).